The primary structure comprises 234 residues: Probable pectate lyase F (234 aa).

Residues 1-17 (MRSTAAVLSILLPGALA) form the signal peptide. Asparagine 168 carries N-linked (GlcNAc...) asparagine glycosylation.

Belongs to the polysaccharide lyase 3 family. Ca(2+) is required as a cofactor.

It is found in the secreted. It catalyses the reaction Eliminative cleavage of (1-&gt;4)-alpha-D-galacturonan to give oligosaccharides with 4-deoxy-alpha-D-galact-4-enuronosyl groups at their non-reducing ends.. Its function is as follows. Pectinolytic enzyme consist of four classes of enzymes: pectin lyase, polygalacturonase, pectin methylesterase and rhamnogalacturonase. Among pectinolytic enzymes, pectin lyase is the most important in depolymerization of pectin, since it cleaves internal glycosidic bonds of highly methylated pectins. Favors pectate, the anion, over pectin, the methyl ester. The protein is Probable pectate lyase F (plyF) of Aspergillus terreus (strain NIH 2624 / FGSC A1156).